The following is a 108-amino-acid chain: Bublin coiled-coil protein (108 aa).

2 disordered regions span residues 1 to 23 (MSGPNGDPNISVEDGLINDDDDF) and 67 to 108 (RLEF…DEGS). The stretch at 25–73 (SEEYEAINSMLDQINSYLDDLEERNDSLNGKLHELMESNRQARLEFRAQ) forms a coiled coil. The segment covering 99–108 (ENDKKIDEGS) has biased composition (basic and acidic residues).

The protein belongs to the UPF0184 (EST00098) family.

Its subcellular location is the cell junction. The protein resides in the cytoplasm. It is found in the cytoskeleton. Essential for intermediate filament organization in intestinal cells, interacts with intermediate filament and regulates intestinal lumen morphology. This Takifugu rubripes (Japanese pufferfish) protein is Bublin coiled-coil protein (bbln).